A 431-amino-acid chain; its full sequence is 3-phosphoshikimate 1-carboxyvinyltransferase (431 aa).

Residues Lys-26, Ser-27, and Arg-31 each contribute to the 3-phosphoshikimate site. Lys-26 serves as a coordination point for phosphoenolpyruvate. The phosphoenolpyruvate site is built by Gly-100 and Arg-129. 5 residues coordinate 3-phosphoshikimate: Ser-175, Ser-176, Gln-177, Asp-308, and Gln-335. Gln-177 serves as a coordination point for phosphoenolpyruvate. The Proton acceptor role is filled by Asp-308. Arg-339, Arg-381, and Lys-412 together coordinate phosphoenolpyruvate.

Belongs to the EPSP synthase family. In terms of assembly, monomer.

Its subcellular location is the cytoplasm. It catalyses the reaction 3-phosphoshikimate + phosphoenolpyruvate = 5-O-(1-carboxyvinyl)-3-phosphoshikimate + phosphate. It participates in metabolic intermediate biosynthesis; chorismate biosynthesis; chorismate from D-erythrose 4-phosphate and phosphoenolpyruvate: step 6/7. Catalyzes the transfer of the enolpyruvyl moiety of phosphoenolpyruvate (PEP) to the 5-hydroxyl of shikimate-3-phosphate (S3P) to produce enolpyruvyl shikimate-3-phosphate and inorganic phosphate. This Opitutus terrae (strain DSM 11246 / JCM 15787 / PB90-1) protein is 3-phosphoshikimate 1-carboxyvinyltransferase.